A 510-amino-acid polypeptide reads, in one-letter code: Lysine-specific demethylase 4D (510 aa).

The region spanning 15–57 is the JmjN domain; sequence IMIFRPTKEEFNDFDKYIAYMESQGAHRAGLAKVIPPKEWRAR. Residues Glu-23 and Glu-24 each carry the polyADP-ribosyl glutamic acid modification. Tyr-133 serves as a coordination point for 2-oxoglutarate. The JmjC domain maps to 143-309; it reads DGKTQQWNVG…YGKVASQCSC (167 aa). Residues His-189 and Glu-191 each coordinate Fe cation. The 2-oxoglutarate site is built by Asn-199 and Lys-207. Zn(2+)-binding residues include Cys-235 and His-241. Lys-242 provides a ligand contact to 2-oxoglutarate. His-277 is a Fe cation binding site. Zn(2+)-binding residues include Cys-307 and Cys-309. The tract at residues 397 to 510 is disordered; it reads MCHTSRQAAD…ASEGGLTSDP (114 aa). Residues 461–471 show a composition bias toward basic and acidic residues; the sequence is RLPEGRDDRSP.

It belongs to the JHDM3 histone demethylase family. The cofactor is Fe(2+). Ubiquitinated via 'Lys-63'-linked ubiquitin chains. Deubiquitinated by USP14 with the help of TRIM14 leading to stabilization.

The protein localises to the nucleus. The enzyme catalyses N(6),N(6),N(6)-trimethyl-L-lysyl(9)-[histone H3] + 2 2-oxoglutarate + 2 O2 = N(6)-methyl-L-lysyl(9)-[histone H3] + 2 formaldehyde + 2 succinate + 2 CO2. Functionally, histone demethylase that specifically demethylates 'Lys-9' of histone H3, thereby playing a central role in histone code. Does not demethylate histone H3 'Lys-4', H3 'Lys-27', H3 'Lys-36' nor H4 'Lys-20'. Demethylates both di- and trimethylated H3 'Lys-9' residue, while it has no activity on monomethylated residues. Demethylation of Lys residue generates formaldehyde and succinate. The chain is Lysine-specific demethylase 4D (Kdm4d) from Rattus norvegicus (Rat).